The chain runs to 282 residues: Probable endonuclease 4 (282 aa).

9 residues coordinate Zn(2+): His-69, His-109, Glu-145, Asp-179, His-182, His-216, Asp-229, His-231, and Glu-261.

It belongs to the AP endonuclease 2 family. The cofactor is Zn(2+).

It catalyses the reaction Endonucleolytic cleavage to 5'-phosphooligonucleotide end-products.. In terms of biological role, endonuclease IV plays a role in DNA repair. It cleaves phosphodiester bonds at apurinic or apyrimidinic (AP) sites, generating a 3'-hydroxyl group and a 5'-terminal sugar phosphate. The sequence is that of Probable endonuclease 4 from Campylobacter hominis (strain ATCC BAA-381 / DSM 21671 / CCUG 45161 / LMG 19568 / NCTC 13146 / CH001A).